The following is a 449-amino-acid chain: Glucose-6-phosphate isomerase (449 aa).

The Proton donor role is filled by E291. Catalysis depends on residues H312 and K426.

This sequence belongs to the GPI family.

It localises to the cytoplasm. It catalyses the reaction alpha-D-glucose 6-phosphate = beta-D-fructose 6-phosphate. The protein operates within carbohydrate biosynthesis; gluconeogenesis. Its pathway is carbohydrate degradation; glycolysis; D-glyceraldehyde 3-phosphate and glycerone phosphate from D-glucose: step 2/4. In terms of biological role, catalyzes the reversible isomerization of glucose-6-phosphate to fructose-6-phosphate. This is Glucose-6-phosphate isomerase from Streptococcus thermophilus (strain CNRZ 1066).